The primary structure comprises 234 residues: Ribitol-5-phosphate cytidylyltransferase (234 aa).

Residues 7 to 10 (LAGG) and 79 to 85 (GSIVQKS) each bind CTP.

The protein belongs to the IspD/TarI cytidylyltransferase family. TarI subfamily.

It catalyses the reaction D-ribitol 5-phosphate + CTP + H(+) = CDP-L-ribitol + diphosphate. Its pathway is cell wall biogenesis; poly(ribitol phosphate) teichoic acid biosynthesis. Its function is as follows. Catalyzes the transfer of the cytidylyl group of CTP to D-ribitol 5-phosphate. The polypeptide is Ribitol-5-phosphate cytidylyltransferase (Lacticaseibacillus paracasei (strain ATCC 334 / BCRC 17002 / CCUG 31169 / CIP 107868 / KCTC 3260 / NRRL B-441) (Lactobacillus paracasei)).